Consider the following 160-residue polypeptide: Phosphopantetheine adenylyltransferase (160 aa).

T10 is a binding site for substrate. ATP contacts are provided by residues 10 to 11 (TF) and H18. Positions 42, 74, and 88 each coordinate substrate. ATP contacts are provided by residues 89–91 (GLR), E99, and 124–130 (HGFLSST).

This sequence belongs to the bacterial CoaD family. In terms of assembly, homohexamer. The cofactor is Mg(2+).

Its subcellular location is the cytoplasm. It carries out the reaction (R)-4'-phosphopantetheine + ATP + H(+) = 3'-dephospho-CoA + diphosphate. It participates in cofactor biosynthesis; coenzyme A biosynthesis; CoA from (R)-pantothenate: step 4/5. Reversibly transfers an adenylyl group from ATP to 4'-phosphopantetheine, yielding dephospho-CoA (dPCoA) and pyrophosphate. In Aliivibrio fischeri (strain MJ11) (Vibrio fischeri), this protein is Phosphopantetheine adenylyltransferase.